Here is a 538-residue protein sequence, read N- to C-terminus: Histone-arginine methyltransferase CARMER (538 aa).

Positions 148–457 constitute an SAM-dependent MTase PRMT-type domain; sequence ASQYFQFYGY…QSYDVTIDLH (310 aa). S-adenosyl-L-methionine contacts are provided by glutamine 161, arginine 170, glycine 194, glutamate 216, glutamate 245, and threonine 273. Arginine 508 bears the Asymmetric dimethylarginine; by autocatalysis mark.

The protein belongs to the class I-like SAM-binding methyltransferase superfamily. Protein arginine N-methyltransferase family. As to quaternary structure, homodimer. In terms of processing, the dimethylated protein is the major form.

It is found in the cytoplasm. It localises to the nucleus. The catalysed reaction is L-arginyl-[protein] + 2 S-adenosyl-L-methionine = N(omega),N(omega)-dimethyl-L-arginyl-[protein] + 2 S-adenosyl-L-homocysteine + 2 H(+). Its function is as follows. Methylates (mono- and asymmetric dimethylation) the guanidino nitrogens of arginyl residues in proteins. May methylate histone H3 at 'Arg-17' and activate transcription via chromatin remodeling. This Drosophila virilis (Fruit fly) protein is Histone-arginine methyltransferase CARMER (Art4).